The primary structure comprises 249 residues: Transcription repressor MYB5 (249 aa).

2 HTH myb-type domains span residues 20–72 and 73–127; these read KMGM…MNYL and RPSV…RKKL. 2 DNA-binding regions (H-T-H motif) span residues 48–72 and 100–123; these read WRSLPKRAGLLRCGKSCRLRWMNYL and WSLIAGRIPGRTDNEIKNYWNTHL. A disordered region spans residues 133-180; it reads DPQTHKPLDANNIHKPEEEVSGGQKYPLEPISSSHTDDTTVNGGDGDS. The segment covering 135-150 has biased composition (basic and acidic residues); that stretch reads QTHKPLDANNIHKPEE.

In terms of assembly, interacts with BHLH002/EGL3/MYC146, BHLH012/MYC1 and BHLH042/TT8. Siliques.

The protein localises to the nucleus. Functionally, transcription activator, when associated with BHLH002/EGL3/MYC146, BHLH012/MYC1 or BHLH042/TT8. The chain is Transcription repressor MYB5 (MYB5) from Arabidopsis thaliana (Mouse-ear cress).